The primary structure comprises 130 residues: ATP synthase epsilon chain, chloroplastic (130 aa).

The protein belongs to the ATPase epsilon chain family. In terms of assembly, F-type ATPases have 2 components, CF(1) - the catalytic core - and CF(0) - the membrane proton channel. CF(1) has five subunits: alpha(3), beta(3), gamma(1), delta(1), epsilon(1). CF(0) has three main subunits: a, b and c.

It localises to the plastid. The protein resides in the chloroplast thylakoid membrane. Produces ATP from ADP in the presence of a proton gradient across the membrane. The polypeptide is ATP synthase epsilon chain, chloroplastic (Emiliania huxleyi (Coccolithophore)).